A 1198-amino-acid chain; its full sequence is Rac guanine nucleotide exchange factor B (1198 aa).

Positions 1-104 are disordered; it reads MFSNFFGSSK…QHQGVITSLQ (104 aa). The segment covering 8–20 has biased composition (low complexity); sequence SSKRNTIASSSSS. The segment covering 21-34 has biased composition (basic and acidic residues); the sequence is SKKDKDNGKDESSK. Residues 35–58 are compositionally biased toward polar residues; it reads LKNSGSSTLPKPITNNESGNNFIT. The segment covering 59–97 has biased composition (low complexity); it reads SPSVSSPLISPLSSSPSPLLSSSSNSIQSTSHQQQQQHQ. Residues 126-232 form the Calponin-homology (CH) 1 domain; sequence SSLEQTARKW…NIVVLGKHAS (107 aa). The disordered stretch occupies residues 260-284; sequence FGGNHNNNNNNNNNNNTSNGDLSPV. Residues 263-275 are compositionally biased toward low complexity; the sequence is NHNNNNNNNNNNN. 2 consecutive Calponin-homology (CH) domains span residues 341-449 and 511-619; these read PELQ…NKMY and PEDM…ENFD. Residues 632–846 enclose the DH domain; the sequence is RRQKVIEEII…KRVADHVNES (215 aa). The region spanning 876–1026 is the PH domain; it reads TYIREGFLEI…WMEDLRSCLQ (151 aa). The span at 940-952 shows a compositional bias: acidic residues; sequence GEACVDGDDDGGE. Disordered regions lie at residues 940–989 and 1076–1198; these read GEAC…SNKS and NNNN…IDNQ. Low complexity-rich tracts occupy residues 977 to 989 and 1076 to 1118; these read NSNN…SNKS and NNNN…NNND. Over residues 1155-1167 the composition is skewed to acidic residues; the sequence is DETISDTESDDYE. A compositionally biased stretch (polar residues) spans 1188 to 1198; it reads FSDTIKNIDNQ.

Binds to F-actin.

Its subcellular location is the late endosome. Functionally, involved in the regulation of the late steps of the endocytic pathway. The protein is Rac guanine nucleotide exchange factor B (gxcB) of Dictyostelium discoideum (Social amoeba).